Reading from the N-terminus, the 246-residue chain is 1-(5-phosphoribosyl)-5-[(5-phosphoribosylamino)methylideneamino] imidazole-4-carboxamide isomerase (246 aa).

The active-site Proton acceptor is the Asp8. Asp131 acts as the Proton donor in catalysis.

Belongs to the HisA/HisF family.

The protein localises to the cytoplasm. The catalysed reaction is 1-(5-phospho-beta-D-ribosyl)-5-[(5-phospho-beta-D-ribosylamino)methylideneamino]imidazole-4-carboxamide = 5-[(5-phospho-1-deoxy-D-ribulos-1-ylimino)methylamino]-1-(5-phospho-beta-D-ribosyl)imidazole-4-carboxamide. It participates in amino-acid biosynthesis; L-histidine biosynthesis; L-histidine from 5-phospho-alpha-D-ribose 1-diphosphate: step 4/9. This Bordetella bronchiseptica (strain ATCC BAA-588 / NCTC 13252 / RB50) (Alcaligenes bronchisepticus) protein is 1-(5-phosphoribosyl)-5-[(5-phosphoribosylamino)methylideneamino] imidazole-4-carboxamide isomerase.